Here is a 131-residue protein sequence, read N- to C-terminus: Large ribosomal subunit protein bL17 (131 aa).

The protein belongs to the bacterial ribosomal protein bL17 family. Part of the 50S ribosomal subunit. Contacts protein L32.

The sequence is that of Large ribosomal subunit protein bL17 from Thermotoga neapolitana (strain ATCC 49049 / DSM 4359 / NBRC 107923 / NS-E).